The following is a 352-amino-acid chain: S-norcoclaurine synthase 1 (352 aa).

Positions 200-304 constitute a Fe2OG dioxygenase domain; the sequence is KPLRTVFNRE…RLSIAAFHDP (105 aa). Residues His228, Asp230, and His285 each contribute to the Fe cation site.

This sequence belongs to the iron/ascorbate-dependent oxidoreductase family. Monomer. It depends on Fe cation as a cofactor.

The enzyme catalyses (4-hydroxyphenyl)acetaldehyde + dopamine = (S)-norcoclaurine + H2O. Inhibited by O-phenanthroline, but not by EDTA. Involved in the biosynthesis of the common precursor of all benzylisoquinoline alkaloids such as morphine, sanguinarine, codeine or berberine. Condenses dopamine and phenylacetaldehyde, 3,4-dihydrophenylacetaldehyde or 4-hydroxyphenylacetaldehyde. The sequence is that of S-norcoclaurine synthase 1 (NCS1) from Coptis japonica (Japanese goldthread).